Consider the following 697-residue polypeptide: Protein Niban 3 (697 aa).

The disordered stretch occupies residues 1–48 (MGPDRKEVPLSRGTQAVVVGKGRGAPGDDSSMGGRPSSPLDKQQRQHL).

This sequence belongs to the Niban family. Specifically expressed in B-lymphocytes.

This Homo sapiens (Human) protein is Protein Niban 3.